The chain runs to 574 residues: Septation ring formation regulator EzrA (574 aa).

The Extracellular segment spans residues 1 to 7 (MSSGIIL). The helical transmembrane segment at 8–26 (LIVAIVLLVIIAYLVGVII) threads the bilayer. Residues 27–574 (RKRNDTLITS…YEKTRERIRF (548 aa)) are Cytoplasmic-facing. 4 coiled-coil regions span residues 102–131 (NFIR…REAL), 161–190 (ENED…FVAL), 276–379 (VTLD…QQEK), and 459–493 (QLEA…NLEE).

This sequence belongs to the EzrA family.

The protein resides in the cell membrane. Its function is as follows. Negative regulator of FtsZ ring formation; modulates the frequency and position of FtsZ ring formation. Inhibits FtsZ ring formation at polar sites. Interacts either with FtsZ or with one of its binding partners to promote depolymerization. The protein is Septation ring formation regulator EzrA of Streptococcus equi subsp. zooepidemicus (strain H70).